Reading from the N-terminus, the 384-residue chain is S-adenosylmethionine synthase (384 aa).

H15 is a binding site for ATP. Mg(2+) is bound at residue D17. E43 provides a ligand contact to K(+). Residues E56 and Q99 each coordinate L-methionine. A flexible loop region spans residues 99–109; the sequence is QSADINQGVDR. Residues 164 to 166, 230 to 231, D239, 245 to 246, A262, and K266 contribute to the ATP site; these read DAK, RF, and RK. An L-methionine-binding site is contributed by D239. Residue K270 participates in L-methionine binding.

Belongs to the AdoMet synthase family. As to quaternary structure, homotetramer; dimer of dimers. The cofactor is Mg(2+). K(+) is required as a cofactor.

It is found in the cytoplasm. The enzyme catalyses L-methionine + ATP + H2O = S-adenosyl-L-methionine + phosphate + diphosphate. It functions in the pathway amino-acid biosynthesis; S-adenosyl-L-methionine biosynthesis; S-adenosyl-L-methionine from L-methionine: step 1/1. Its function is as follows. Catalyzes the formation of S-adenosylmethionine (AdoMet) from methionine and ATP. The overall synthetic reaction is composed of two sequential steps, AdoMet formation and the subsequent tripolyphosphate hydrolysis which occurs prior to release of AdoMet from the enzyme. This chain is S-adenosylmethionine synthase, found in Haemophilus influenzae (strain PittEE).